The following is a 466-amino-acid chain: Putative proline/betaine transporter (466 aa).

The next 12 helical transmembrane spans lie at 20–42 (VVAT…YTTA), 63–83 (FAAL…FGII), 91–111 (VVLT…GLLP), 116–136 (IGLW…FSTG), 164–184 (IGTL…TFFL), 191–211 (SFGW…GLYL), 239–259 (IIRF…FFNV), 285–305 (VLIT…GKLA), 313–332 (VFLI…FMLL), 337–354 (FVVI…LSTY), 377–397 (VTFN…ATWL), and 405–425 (LAPA…ITFL).

Belongs to the major facilitator superfamily. Metabolite:H+ Symporter (MHS) family (TC 2.A.1.6) family.

The protein resides in the cell membrane. May be a proton symporter involved in the uptake of osmolytes such as proline and glycine betaine. The protein is Putative proline/betaine transporter (proP) of Staphylococcus aureus (strain MSSA476).